The following is a 249-amino-acid chain: Isoamyl acetate-hydrolyzing esterase 1 homolog (249 aa).

Catalysis depends on Ser24, which acts as the Nucleophile. Lys63 is modified (N6-succinyllysine). Residue Asp197 is the Proton donor of the active site. Catalysis depends on His200, which acts as the Proton acceptor.

The protein belongs to the 'GDSL' lipolytic enzyme family. IAH1 subfamily.

Probable lipase. The chain is Isoamyl acetate-hydrolyzing esterase 1 homolog (Iah1) from Mus musculus (Mouse).